Here is a 421-residue protein sequence, read N- to C-terminus: Gamma-glutamyl phosphate reductase (421 aa).

Belongs to the gamma-glutamyl phosphate reductase family.

The protein localises to the cytoplasm. It catalyses the reaction L-glutamate 5-semialdehyde + phosphate + NADP(+) = L-glutamyl 5-phosphate + NADPH + H(+). It participates in amino-acid biosynthesis; L-proline biosynthesis; L-glutamate 5-semialdehyde from L-glutamate: step 2/2. In terms of biological role, catalyzes the NADPH-dependent reduction of L-glutamate 5-phosphate into L-glutamate 5-semialdehyde and phosphate. The product spontaneously undergoes cyclization to form 1-pyrroline-5-carboxylate. The protein is Gamma-glutamyl phosphate reductase of Nitrosospira multiformis (strain ATCC 25196 / NCIMB 11849 / C 71).